Here is a 166-residue protein sequence, read N- to C-terminus: Urease accessory protein UreE (166 aa).

The segment at glutamate 135 to glycine 156 is disordered.

The protein belongs to the UreE family.

Its subcellular location is the cytoplasm. Involved in urease metallocenter assembly. Binds nickel. Probably functions as a nickel donor during metallocenter assembly. This Ectopseudomonas mendocina (strain ymp) (Pseudomonas mendocina) protein is Urease accessory protein UreE.